The sequence spans 139 residues: NADH dehydrogenase [ubiquinone] 1 alpha subcomplex subunit MCI4 (139 aa).

It belongs to the complex I NDUFA5 subunit family.

The protein localises to the mitochondrion inner membrane. Functionally, accessory subunit of the mitochondrial membrane respiratory chain NADH dehydrogenase (Complex I), that is believed not to be involved in catalysis. Complex I functions in the transfer of electrons from NADH to the respiratory chain. The immediate electron acceptor for the enzyme is believed to be ubiquinone. Involved in osmotic and oxidative resistance, yeast to hypha transition and the ability to damage and invade oral epithelial cells. The chain is NADH dehydrogenase [ubiquinone] 1 alpha subcomplex subunit MCI4 from Candida albicans (strain SC5314 / ATCC MYA-2876) (Yeast).